The following is a 212-amino-acid chain: Uracil phosphoribosyltransferase (212 aa).

5-phospho-alpha-D-ribose 1-diphosphate is bound by residues Arg78, Arg103, and 130 to 138 (DPMLATGGS). Uracil is bound by residues Ile193 and 198 to 200 (GDA). Asp199 serves as a coordination point for 5-phospho-alpha-D-ribose 1-diphosphate.

It belongs to the UPRTase family. It depends on Mg(2+) as a cofactor.

The enzyme catalyses UMP + diphosphate = 5-phospho-alpha-D-ribose 1-diphosphate + uracil. Its pathway is pyrimidine metabolism; UMP biosynthesis via salvage pathway; UMP from uracil: step 1/1. Allosterically activated by GTP. Its function is as follows. Catalyzes the conversion of uracil and 5-phospho-alpha-D-ribose 1-diphosphate (PRPP) to UMP and diphosphate. In Pseudomonas entomophila (strain L48), this protein is Uracil phosphoribosyltransferase.